The chain runs to 334 residues: Type II methyltransferase M.NlaIII (334 aa).

This sequence belongs to the N(4)/N(6)-methyltransferase family.

The catalysed reaction is a 2'-deoxyadenosine in DNA + S-adenosyl-L-methionine = an N(6)-methyl-2'-deoxyadenosine in DNA + S-adenosyl-L-homocysteine + H(+). Its function is as follows. A methylase, recognizes the double-stranded sequence 5'-CATG-3', methylates A-2 on both strands and protects the DNA from cleavage by the NlaIII endonuclease. This chain is Type II methyltransferase M.NlaIII (nlaIIIM), found in Neisseria lactamica.